Here is a 188-residue protein sequence, read N- to C-terminus: Elongation factor P (188 aa).

This sequence belongs to the elongation factor P family.

It localises to the cytoplasm. It participates in protein biosynthesis; polypeptide chain elongation. In terms of biological role, involved in peptide bond synthesis. Stimulates efficient translation and peptide-bond synthesis on native or reconstituted 70S ribosomes in vitro. Probably functions indirectly by altering the affinity of the ribosome for aminoacyl-tRNA, thus increasing their reactivity as acceptors for peptidyl transferase. The sequence is that of Elongation factor P from Rickettsia canadensis (strain McKiel).